The primary structure comprises 213 residues: General transcription factor 3C polypeptide 6 (213 aa).

Residues 1–11 (MAAAADERSPE) are compositionally biased toward basic and acidic residues. Disordered stretches follow at residues 1–20 (MAAA…EEEE) and 191–213 (SGPL…QMLP). A2 carries the post-translational modification N-acetylalanine. S9 carries the post-translational modification Phosphoserine.

The protein belongs to the TFIIIC subunit 6 family. As to quaternary structure, part of the TFIIIC subcomplex TFIIIC2, consisting of six subunits, GTF3C1, GTF3C2, GTF3C3, GTF3C4, GTF3C5 and GTF3C6. Interacts with GTF3C4 and GTF3C5.

The protein resides in the nucleus. Functionally, involved in RNA polymerase III-mediated transcription. Integral, tightly associated component of the DNA-binding TFIIIC2 subcomplex that directly binds tRNA and virus-associated RNA promoters. The chain is General transcription factor 3C polypeptide 6 (GTF3C6) from Homo sapiens (Human).